The sequence spans 63 residues: Parvalbumin alpha (63 aa).

EF-hand domains follow at residues 28 to 38 (IEEEELGLILK) and 39 to 63 (VLLA…LVSE). Glu-29, Glu-32, Asp-45, Asp-47, Asp-49, Lys-51, and Glu-56 together coordinate Ca(2+).

As to expression, detected in muscle and cutaneous mucus. In the skin, detected in cells in the basal region of the glandular epithelium of the dermal mucus glands (at protein level).

It localises to the cytoplasm. It is found in the secreted. Functionally, in muscle, parvalbumin is thought to be involved in relaxation after contraction. It binds two calcium ions. The protein is Parvalbumin alpha of Rana temporaria (European common frog).